The primary structure comprises 331 residues: 7,8-didemethyl-8-hydroxy-5-deazariboflavin synthase (331 aa).

A Radical SAM core domain is found at 6-244 (ITFSKNAFLP…ADVAVQIPPN (239 aa)). [4Fe-4S] cluster is bound by residues C20, C24, and C27.

It belongs to the radical SAM superfamily. CofG family. Consists of two subunits, CofG and CofH. Requires [4Fe-4S] cluster as cofactor.

The enzyme catalyses 5-amino-5-(4-hydroxybenzyl)-6-(D-ribitylimino)-5,6-dihydrouracil + S-adenosyl-L-methionine = 7,8-didemethyl-8-hydroxy-5-deazariboflavin + 5'-deoxyadenosine + L-methionine + NH4(+) + H(+). It functions in the pathway cofactor biosynthesis; coenzyme F0 biosynthesis. In terms of biological role, catalyzes the radical-mediated synthesis of 7,8-didemethyl-8-hydroxy-5-deazariboflavin from 5-amino-5-(4-hydroxybenzyl)-6-(D-ribitylimino)-5,6-dihydrouracil. In Methanoculleus marisnigri (strain ATCC 35101 / DSM 1498 / JR1), this protein is 7,8-didemethyl-8-hydroxy-5-deazariboflavin synthase.